The sequence spans 314 residues: DNA-directed RNA polymerase subunit alpha (314 aa).

The segment at 1-228 is alpha N-terminal domain (alpha-NTD); that stretch reads MAQFQIECVE…NLFIPLKDLN (228 aa). The interval 243-314 is alpha C-terminal domain (alpha-CTD); sequence PESQIPIEEL…ITLPHEKAKA (72 aa).

This sequence belongs to the RNA polymerase alpha chain family. In terms of assembly, homodimer. In cyanobacteria the RNAP catalytic core is composed of 2 alpha, 1 beta, 1 beta', 1 gamma and 1 omega subunit. When a sigma factor is associated with the core the holoenzyme is formed, which can initiate transcription.

The enzyme catalyses RNA(n) + a ribonucleoside 5'-triphosphate = RNA(n+1) + diphosphate. In terms of biological role, DNA-dependent RNA polymerase catalyzes the transcription of DNA into RNA using the four ribonucleoside triphosphates as substrates. This Synechocystis sp. (strain ATCC 27184 / PCC 6803 / Kazusa) protein is DNA-directed RNA polymerase subunit alpha.